A 622-amino-acid chain; its full sequence is Gamma tubulin complex adapter SPC72 (622 aa).

Disordered regions lie at residues 1–58 (MVRR…PALM) and 221–263 (DKEE…IHDS). The segment covering 228–238 (LAQSSPAGSQL) has biased composition (polar residues). A compositionally biased stretch (basic and acidic residues) spans 239–250 (ESRDSPSSKEEN).

As to quaternary structure, homooligomer. Interacts with CDC5, KAR1, KIN4, SPC97, SPC98, STU2 and TUB4. Post-translationally, phosphorylated by CDC5.

The protein resides in the cytoplasm. Its subcellular location is the cytoskeleton. The protein localises to the microtubule organizing center. It is found in the spindle pole body. In terms of biological role, spindle pole body (SPB) component that acts as the gamma-tubulin complex-binding protein of the SPB outer plaque. Anchors cytoplasmic microtubules at the half bridge of the spindle pole body (SPB) and accordingly functions in nuclear position and spindle orientation, including anaphase spindle migration into the bud. Recruits KIN4 kinase to both SPBs when cytoplasmic microtubules are defective, to delay mitotic exit. Links cytoplasmic microtubules with spindle orientation checkpoint (SPOC) components and, therefore, could function as part of the sensors of spindle orientation defects. Required for cytoplasmic astral microtubule growth during mitosis. Is strictly required for mating and karyogamy. The protein is Gamma tubulin complex adapter SPC72 (SPC72) of Saccharomyces cerevisiae (strain ATCC 204508 / S288c) (Baker's yeast).